The primary structure comprises 514 residues: MVDKFLIETDQNEFQPNLWKNGDSDRLPNRCPETQLNVLVVGAGPSGLMTALECWRKGHNVVKILERSNSPVFTGDVIVIGPSALRAFRHWPDMCAELEKSKMDSIMYYRKHNGELILGPTSLGHNDPEYTAAWKGIPFAAPHQIRKDFYRMLLRQVARVGIRVEYGQRVEKYFDDEAAMLGGVITDQGTIMFADLVVAADANRTRSDLLIAGAHTPSRSSGMSVYRTAFPTERALQDEAFRTRWGDAIEKGISHHEFWMGPGMHLGLFISPEFVAFGLTPRDSFLHEGGNEPIESWEPDVDPEEVTKVLNRVPDWNPVIKSLVKNTQRGSIVHWPLLWRNLRREWTSKSGRVVQAGDAAHSSIPASISGGTLALEDAVTLASCLHLSCSSAGSKGAPLGARIYNLLRYQRVSCVQKMSFVNAEGLSGSSMEDAIKENPESVRVRFPRWLYRHDPEAYVYEKYGQAFAHLVEGTDFENTNLPPGHTFEPWTIEQIHKDMMAGKRVADFLDGDWS.

FAD-binding residues include Val79 and Arg146. Arg227 is an active-site residue. Positions 358 and 371 each coordinate FAD.

Belongs to the paxM FAD-dependent monooxygenase family. It depends on FAD as a cofactor.

The protein operates within pigment biosynthesis. In terms of biological role, FAD-dependent monooxygenase; part of the ergochrome gene cluster responsible for the typical purple-black color of the ergot sclerotia. The ergochrome gene cluster produces several ergot pigments including the yellow ergochrome secalonic acid and its derivatives, as well as the red anthraquinones endocrocin and clavorubin. The pathway begins with the synthesis of atrochrysone thioester by the polyketide synthase (PKS) CPUR_05437. The atrochrysone carboxyl ACP thioesterase CPUR_05436 then breaks the thioester bond and releases the atrochrysone carboxylic acid from CPUR_05437. The atrochrysone carboxylic acid is then converted to atrochrysone which is further transformed into emodin anthrone. The next step is performed by the anthrone oxygenase CPUR_05434 that catalyzes the oxidation of emodinanthrone to emodin. Emodin is further modified to yield monodictyphenone via several steps involving CPUR_05427, CPUR_05428, CPUR_05429 and CPUR_05430. The short chain dehydrogenase/reductase CPUR_05418 then catalyzes the C-5 ketoreduction to give the xanthone skeleton of the monomeric units. Ergochromes formation requires further dimerization steps of different xanthone units, probably catalyzed by the cytochrome P450 monooxygenase CPUR_05419. CPUR_05425, CPUR_05426 and CPUR_05431 are unique to Claviceps, thus it is likely that they are involved in further modification of xanthone units or in their dimerization. The yellow ergochromes and the red anthraquinone pigments endocrocin and clavorubin are products from the same PKS derived precursors and the latter are likely shunt products in the pathway of xanthone biosynthesis. It is proposed that atrochrysone carboxylic acid released from the PKS CPUR_05437 can also be converted to endocrocin anthrone which is further oxidized into endocrocin by CPUR_05435. Endocrocin could be then modified to clavorubin, possibly by CPUR_05423 and CPUR_05431. Clavorubin is the principal anthraquinone metabolite produced by the cluster with a much higher yield compared to endocrocin. The chain is FAD-dependent monooxygenase CPUR_05423 from Claviceps purpurea (strain 20.1) (Ergot fungus).